A 136-amino-acid chain; its full sequence is Histone H3.2 (136 aa).

The segment at 1–43 (MARTKQTARKSTGGKAPRKQLATKAARKSAPATGGVKKPHRFR) is disordered. Lys-5 is modified (N6-methylated lysine). Lys-10 is subject to N6-acetyllysine; alternate. An N6-methylated lysine; alternate modification is found at Lys-10. Position 11 is a phosphoserine (Ser-11). Thr-12 carries the phosphothreonine modification. Position 15 is an N6-acetyllysine (Lys-15). Residues Lys-19 and Lys-24 each carry the N6-acetyllysine; alternate modification. 2 positions are modified to N6-methylated lysine; alternate: Lys-19 and Lys-24. An N6-methylated lysine modification is found at Lys-28. Ser-29 carries the post-translational modification Phosphoserine. At Lys-37 the chain carries N6-methylated lysine.

This sequence belongs to the histone H3 family. In terms of assembly, the nucleosome is a histone octamer containing two molecules each of H2A, H2B, H3 and H4 assembled in one H3-H4 heterotetramer and two H2A-H2B heterodimers. The octamer wraps approximately 147 bp of DNA. In terms of processing, acetylation is generally linked to gene activation. Can be acetylated to form H3K9ac, H3K14ac, H3K18ac and H3K23ac. H3K9ac could compete with H3K9me and prevent gene silencing. H3K9ac is restricted to euchromatin. Methylated to form mainly H3K4me, H3K9me, H3K18me, H3K23me, H3K27me and H3K36me. H3K4me1/2/3, H3K9me3, H3K27me3 and H3K36me1/2/3 are typical marks for euchromatin, whereas heterochromatic chromocenters are enriched in H3K9me1/2 and H3K27me1/2. H2BK143ub1 is probably prerequisite for H3K4me. Post-translationally, can be phosphorylated to form H3S10ph, H3T11ph and H3S28ph.

The protein resides in the nucleus. It is found in the chromosome. Functionally, core component of nucleosome. Nucleosomes wrap and compact DNA into chromatin, limiting DNA accessibility to the cellular machineries which require DNA as a template. Histones thereby play a central role in transcription regulation, DNA repair, DNA replication and chromosomal stability. DNA accessibility is regulated via a complex set of post-translational modifications of histones, also called histone code, and nucleosome remodeling. This Encephalartos altensteinii (Altenstein's bread tree) protein is Histone H3.2.